A 481-amino-acid polypeptide reads, in one-letter code: Glutamine synthetase (481 aa).

Residues 22–106 (NEVEFVDFRF…VFCDVYDVYK (85 aa)) form the GS beta-grasp domain. One can recognise a GS catalytic domain in the interval 114 to 481 (PRSIAKKALK…PFEFITTYSC (368 aa)). Residues E139, E141, E223, and E230 each contribute to the Mg(2+) site. Residues 274 to 275 (NG) and G275 contribute to the L-glutamate site. Position 279 (H279) interacts with Mg(2+). Residues 281–283 (HVS) and S283 contribute to the ATP site. L-glutamate contacts are provided by R331, E337, and R349. The ATP site is built by R349 and R354. E367 contributes to the Mg(2+) binding site. R369 provides a ligand contact to L-glutamate.

Belongs to the glutamine synthetase family. In terms of assembly, oligomer of 12 subunits arranged in the form of two hexameric ring. Mg(2+) serves as cofactor.

The protein localises to the cytoplasm. It catalyses the reaction L-glutamate + NH4(+) + ATP = L-glutamine + ADP + phosphate + H(+). With respect to regulation, the activity of this enzyme could be controlled by adenylation under conditions of abundant glutamine. In terms of biological role, catalyzes the ATP-dependent biosynthesis of glutamine from glutamate and ammonia. This is Glutamine synthetase from Helicobacter pylori (strain J99 / ATCC 700824) (Campylobacter pylori J99).